A 183-amino-acid polypeptide reads, in one-letter code: MKGGKRVQPARPNRINKEIRATEVRLTGVDGEQIGIVSLNEALEKAEEAGVDLVEISPNAEPPVCRIMDYGKFLYEKSKSTKEQKKKQKVIQVKEIKFRPGTDDGDYQVKLRNLIRFLEDGDKAKITLRFRGREMAHQQIGMEVLNRVRKDLCEDSDLAVVESFPTRIEGRQMIMVLAPKKRQ.

This sequence belongs to the IF-3 family. Monomer.

It localises to the cytoplasm. IF-3 binds to the 30S ribosomal subunit and shifts the equilibrium between 70S ribosomes and their 50S and 30S subunits in favor of the free subunits, thus enhancing the availability of 30S subunits on which protein synthesis initiation begins. This Yersinia pseudotuberculosis serotype O:1b (strain IP 31758) protein is Translation initiation factor IF-3.